A 154-amino-acid polypeptide reads, in one-letter code: Myoglobin (154 aa).

Positions 2–148 (VLSDAEWQLV…FRKDIAAKYK (147 aa)) constitute a Globin domain. Phosphoserine is present on Ser-4. His-65 lines the nitrite pocket. Position 65 (His-65) interacts with O2. Position 68 is a phosphothreonine (Thr-68). His-94 serves as a coordination point for heme b.

This sequence belongs to the globin family. In terms of assembly, monomeric.

The protein localises to the cytoplasm. The protein resides in the sarcoplasm. The enzyme catalyses Fe(III)-heme b-[protein] + nitric oxide + H2O = Fe(II)-heme b-[protein] + nitrite + 2 H(+). It catalyses the reaction H2O2 + AH2 = A + 2 H2O. Monomeric heme protein which primary function is to store oxygen and facilitate its diffusion within muscle tissues. Reversibly binds oxygen through a pentacoordinated heme iron and enables its timely and efficient release as needed during periods of heightened demand. Depending on the oxidative conditions of tissues and cells, and in addition to its ability to bind oxygen, it also has a nitrite reductase activity whereby it regulates the production of bioactive nitric oxide. Under stress conditions, like hypoxia and anoxia, it also protects cells against reactive oxygen species thanks to its pseudoperoxidase activity. The protein is Myoglobin (MB) of Eschrichtius robustus (California gray whale).